Here is a 316-residue protein sequence, read N- to C-terminus: MIKSERPQAYIGRFAPSPSGDLHFGSLITAIGSYLQARACQGKWLIRIDDIDPPREVPGAASRILHALEHYGLHWDGEILYQSQRHEAYCHVLNQLQQQGLSYYCTCTRQRIHQINGFYDRNCRELNLPIDHAAIRFKQRHPVYGFEDKLQGYLNADPVMAEEDFIIHRRDGLFAYNLVVVIDDDYQGVTEVVRGVDLIEPTVRQIALYRQLNLKIPDYIHLPLALNKDGNKLSKQNHAQPIPLDDPRPLLIEALSFLNQSVIENWQDLSRDQLLQKATAHWDLDRIPRQGKIHIDNMNKVTVSHNNHSQKIHSRL.

Residues 13-17 (RFAPS) and Asp-49 contribute to the L-glutamate site. A 'HIGH' region motif is present at residues 16-26 (PSPSGDLHFGS). Zn(2+) is bound by residues Cys-105, Cys-107, Tyr-119, and Cys-123. Residues Tyr-176 and Arg-194 each coordinate L-glutamate. A 'KMSKS' region motif is present at residues 232–236 (KLSKQ). Lys-235 is a binding site for ATP.

It belongs to the class-I aminoacyl-tRNA synthetase family. GluQ subfamily. Requires Zn(2+) as cofactor.

Its function is as follows. Catalyzes the tRNA-independent activation of glutamate in presence of ATP and the subsequent transfer of glutamate onto a tRNA(Asp). Glutamate is transferred on the 2-amino-5-(4,5-dihydroxy-2-cyclopenten-1-yl) moiety of the queuosine in the wobble position of the QUC anticodon. This is Glutamyl-Q tRNA(Asp) synthetase from Photorhabdus laumondii subsp. laumondii (strain DSM 15139 / CIP 105565 / TT01) (Photorhabdus luminescens subsp. laumondii).